The sequence spans 820 residues: Trimethylamine-N-oxide reductase (820 aa).

The tat-type signal signal peptide spans Met-1–Ala-33. Ser-179 serves as a coordination point for Mo-bis(molybdopterin guanine dinucleotide).

This sequence belongs to the prokaryotic molybdopterin-containing oxidoreductase family. The cofactor is Mo-bis(molybdopterin guanine dinucleotide). Predicted to be exported by the Tat system. The position of the signal peptide cleavage has not been experimentally proven.

It localises to the periplasm. The enzyme catalyses trimethylamine + 2 Fe(III)-[cytochrome c] + H2O = trimethylamine N-oxide + 2 Fe(II)-[cytochrome c] + 3 H(+). Its function is as follows. Reduces trimethylamine-N-oxide (TMAO) into trimethylamine; an anaerobic reaction coupled to energy-yielding reactions. This is Trimethylamine-N-oxide reductase (torA) from Vibrio cholerae serotype O1 (strain ATCC 39315 / El Tor Inaba N16961).